A 416-amino-acid polypeptide reads, in one-letter code: Glyceraldehyde-3-phosphate dehydrogenase, chloroplastic (416 aa).

Residues 1-78 constitute a chloroplast transit peptide; that stretch reads MAFVAPVSSV…APARTSNAPS (78 aa). NADP(+) contacts are provided by residues 90–91, Asp114, and Arg158; that span reads RI. D-glyceraldehyde 3-phosphate is bound by residues 232–234, Thr263, Arg278, 291–292, and Arg314; these read SCT and TG. Catalysis depends on Cys233, which acts as the Nucleophile. Asn396 is a binding site for NADP(+).

Belongs to the glyceraldehyde-3-phosphate dehydrogenase family. As to quaternary structure, homotetramer.

The protein resides in the plastid. It is found in the chloroplast. It catalyses the reaction D-glyceraldehyde 3-phosphate + phosphate + NADP(+) = (2R)-3-phospho-glyceroyl phosphate + NADPH + H(+). It functions in the pathway carbohydrate biosynthesis; Calvin cycle. The sequence is that of Glyceraldehyde-3-phosphate dehydrogenase, chloroplastic (GAPA) from Gracilaria gracilis (Red alga).